A 557-amino-acid chain; its full sequence is Hepatocyte nuclear factor 1-beta (557 aa).

A dimerization region spans residues 1 to 31 (MVSKLTSLQQELLSALLSSGVTKEVLVQALE). The HNF-p1 domain maps to 1-32 (MVSKLTSLQQELLSALLSSGVTKEVLVQALEE). A phosphoserine mark is found at S49, S52, S75, and S80. The segment at 64 to 85 (TLTNGHAKGRLSGDEGSEDGDD) is disordered. One can recognise a POU-specific atypical domain in the interval 93–188 (KELQALNTEE…ILRQFNQTVQ (96 aa)). The homeobox; HNF1-type DNA-binding region spans 231–311 (MRRNRFKWGP…NRRKEEAFRQ (81 aa)). Positions 324–352 (HSLNPLLSHGSPHHQPSSSPPNKLSGVRY) are disordered. The span at 328-344 (PLLSHGSPHHQPSSSPP) shows a compositional bias: low complexity.

This sequence belongs to the HNF1 homeobox family. In terms of assembly, binds DNA as a dimer. Can form homodimer or heterodimer with HNF1-alpha. Interacts (via HNF-p1 domain) with PCBD1; the interaction increases its transactivation activity.

It localises to the nucleus. Transcription factor that binds to the inverted palindrome 5'-GTTAATNATTAAC-3'. Binds to the FPC element in the cAMP regulatory unit of the PLAU gene. Transcriptional activity is increased by coactivator PCBD1. The polypeptide is Hepatocyte nuclear factor 1-beta (HNF1B) (Homo sapiens (Human)).